We begin with the raw amino-acid sequence, 440 residues long: Microtubule-associated tumor suppressor 1 homolog A (440 aa).

The segment at 44–67 (KSRTNSKNPQPPTNGQPDLVPPES) is disordered. The stretch at 69 to 401 (SRNVEYYKAQ…RLSMENEELL (333 aa)) forms a coiled coil. The segment at 407–440 (GDLNSPRKISPSPSLNLQSPRTSGMFSSPPVSPR) is disordered. The segment covering 417 to 432 (PSPSLNLQSPRTSGMF) has biased composition (polar residues).

It belongs to the MTUS1 family. As to quaternary structure, homodimer.

The protein localises to the mitochondrion. The protein resides in the golgi apparatus. It localises to the cell membrane. It is found in the nucleus. In terms of biological role, may inhibit cell proliferation. The protein is Microtubule-associated tumor suppressor 1 homolog A (mtus1a) of Danio rerio (Zebrafish).